Reading from the N-terminus, the 291-residue chain is Small ribosomal subunit protein uS2 (291 aa).

This sequence belongs to the universal ribosomal protein uS2 family.

The protein is Small ribosomal subunit protein uS2 of Lawsonia intracellularis (strain PHE/MN1-00).